A 374-amino-acid polypeptide reads, in one-letter code: NAD-capped RNA hydrolase ndx-9 (374 aa).

Zn(2+)-binding residues include Cys-181, Cys-184, Cys-199, and Cys-202. Substrate-binding positions include Tyr-207, 243–245, Glu-259, Glu-263, and Glu-307; that span reads AGF. Residues 208 to 336 form the Nudix hydrolase domain; the sequence is PTFSPVSITL…LADPLLKNLP (129 aa). Ala-243, Glu-259, Glu-263, and Glu-307 together coordinate Mg(2+). A Nudix box motif is present at residues 244 to 265; it reads GFAHSGESMAECARREIAEEVG. The Microbody targeting signal signature appears at 367-369; the sequence is LEN.

Belongs to the Nudix hydrolase family. NudC subfamily. Homodimer. Mg(2+) is required as a cofactor. Requires Mn(2+) as cofactor. The cofactor is Zn(2+).

The enzyme catalyses a 5'-end NAD(+)-phospho-ribonucleoside in mRNA + H2O = a 5'-end phospho-adenosine-phospho-ribonucleoside in mRNA + beta-nicotinamide D-ribonucleotide + 2 H(+). It catalyses the reaction NAD(+) + H2O = beta-nicotinamide D-ribonucleotide + AMP + 2 H(+). The catalysed reaction is NADH + H2O = reduced beta-nicotinamide D-ribonucleotide + AMP + 2 H(+). Its function is as follows. mRNA decapping enzyme that specifically removes the nicotinamide adenine dinucleotide (NAD) cap from a subset of mRNAs by hydrolyzing the diphosphate linkage to produce nicotinamide mononucleotide (NMN) and 5' monophosphate mRNA. The NAD-cap is present at the 5'-end of some RNAs; in contrast to the canonical N7 methylguanosine (m7G) cap, the NAD cap promotes mRNA decay. Mediates the hydrolysis of some nucleoside diphosphate derivatives. The protein is NAD-capped RNA hydrolase ndx-9 (ndx-9) of Caenorhabditis elegans.